The following is a 347-amino-acid chain: GMP reductase (347 aa).

Position 108–131 (108–131) interacts with NADP(+); it reads ADFEKTVQILALNPALNFVCIDVA. 2 residues coordinate K(+): Gly-181 and Gly-183. The Thioimidate intermediate role is filled by Cys-186. NADP(+) is bound at residue 216–239; sequence IVSDGGCTMPGDVAKAFGGGADFV.

This sequence belongs to the IMPDH/GMPR family. GuaC type 1 subfamily. Homotetramer.

It catalyses the reaction IMP + NH4(+) + NADP(+) = GMP + NADPH + 2 H(+). Catalyzes the irreversible NADPH-dependent deamination of GMP to IMP. It functions in the conversion of nucleobase, nucleoside and nucleotide derivatives of G to A nucleotides, and in maintaining the intracellular balance of A and G nucleotides. This Salmonella choleraesuis (strain SC-B67) protein is GMP reductase.